A 242-amino-acid polypeptide reads, in one-letter code: Acetoacetyl-CoA reductase (242 aa).

Residues 12-14 (RGI) and 82-86 (NAGIT) each bind NADP(+). Substrate-binding positions include Asp-88 and 141 to 144 (QAGQ). Tyr-147 serves as the catalytic Proton acceptor. Position 177–180 (177–180 (PGYI)) interacts with NADP(+). 178-179 (GY) is a substrate binding site.

The protein belongs to the short-chain dehydrogenases/reductases (SDR) family.

Its subcellular location is the cytoplasm. The enzyme catalyses a (3R)-3-hydroxyacyl-CoA + NADP(+) = a 3-oxoacyl-CoA + NADPH + H(+). Its pathway is biopolymer metabolism; poly-(R)-3-hydroxybutanoate biosynthesis. The protein is Acetoacetyl-CoA reductase (phaB) of Paracoccus denitrificans.